The sequence spans 384 residues: DNA replication and repair protein RecF (384 aa).

43-50 (GENGSGKT) contacts ATP.

It belongs to the RecF family.

The protein resides in the cytoplasm. Its function is as follows. The RecF protein is involved in DNA metabolism; it is required for DNA replication and normal SOS inducibility. RecF binds preferentially to single-stranded, linear DNA. It also seems to bind ATP. In Brucella suis biovar 1 (strain 1330), this protein is DNA replication and repair protein RecF.